The primary structure comprises 283 residues: Urease accessory protein UreD (283 aa).

The protein belongs to the UreD family. UreD, UreF and UreG form a complex that acts as a GTP-hydrolysis-dependent molecular chaperone, activating the urease apoprotein by helping to assemble the nickel containing metallocenter of UreC. The UreE protein probably delivers the nickel.

The protein resides in the cytoplasm. In terms of biological role, required for maturation of urease via the functional incorporation of the urease nickel metallocenter. The polypeptide is Urease accessory protein UreD (Acaryochloris marina (strain MBIC 11017)).